We begin with the raw amino-acid sequence, 95 residues long: Large ribosomal subunit protein bL25 (95 aa).

Positions 1-20 (MSFKFNAEVRSKQGKGASRR) are disordered.

This sequence belongs to the bacterial ribosomal protein bL25 family. Part of the 50S ribosomal subunit; part of the 5S rRNA/L5/L18/L25 subcomplex. Contacts the 5S rRNA. Binds to the 5S rRNA independently of L5 and L18.

In terms of biological role, this is one of the proteins that binds to the 5S RNA in the ribosome where it forms part of the central protuberance. The protein is Large ribosomal subunit protein bL25 of Histophilus somni (strain 129Pt) (Haemophilus somnus).